A 518-amino-acid polypeptide reads, in one-letter code: Bifunctional purine biosynthesis protein PurH (518 aa).

An MGS-like domain is found at 1-144; the sequence is MNRRAVLSVS…KNQERVSIVV (144 aa).

It belongs to the PurH family.

It carries out the reaction (6R)-10-formyltetrahydrofolate + 5-amino-1-(5-phospho-beta-D-ribosyl)imidazole-4-carboxamide = 5-formamido-1-(5-phospho-D-ribosyl)imidazole-4-carboxamide + (6S)-5,6,7,8-tetrahydrofolate. The enzyme catalyses IMP + H2O = 5-formamido-1-(5-phospho-D-ribosyl)imidazole-4-carboxamide. The protein operates within purine metabolism; IMP biosynthesis via de novo pathway; 5-formamido-1-(5-phospho-D-ribosyl)imidazole-4-carboxamide from 5-amino-1-(5-phospho-D-ribosyl)imidazole-4-carboxamide (10-formyl THF route): step 1/1. Its pathway is purine metabolism; IMP biosynthesis via de novo pathway; IMP from 5-formamido-1-(5-phospho-D-ribosyl)imidazole-4-carboxamide: step 1/1. The polypeptide is Bifunctional purine biosynthesis protein PurH (Desulfitobacterium hafniense (strain DSM 10664 / DCB-2)).